The chain runs to 288 residues: Proteasome subunit beta (288 aa).

The propeptide at 1–57 is removed in mature form; by autocatalysis; the sequence is MTAGDPMRLHPGHALSSFTEHLRALAPELLGPNRFAALDGATGSSGGTGAKDIAPHG. The Nucleophile role is filled by T58.

Belongs to the peptidase T1B family. As to quaternary structure, the 20S proteasome core is composed of 14 alpha and 14 beta subunits that assemble into four stacked heptameric rings, resulting in a barrel-shaped structure. The two inner rings, each composed of seven catalytic beta subunits, are sandwiched by two outer rings, each composed of seven alpha subunits. The catalytic chamber with the active sites is on the inside of the barrel. Has a gated structure, the ends of the cylinder being occluded by the N-termini of the alpha-subunits. Is capped by the proteasome-associated ATPase, ARC.

The protein localises to the cytoplasm. It catalyses the reaction Cleavage of peptide bonds with very broad specificity.. The protein operates within protein degradation; proteasomal Pup-dependent pathway. The formation of the proteasomal ATPase ARC-20S proteasome complex, likely via the docking of the C-termini of ARC into the intersubunit pockets in the alpha-rings, may trigger opening of the gate for substrate entry. Interconversion between the open-gate and close-gate conformations leads to a dynamic regulation of the 20S proteasome proteolysis activity. Its function is as follows. Component of the proteasome core, a large protease complex with broad specificity involved in protein degradation. The protein is Proteasome subunit beta of Nocardia farcinica (strain IFM 10152).